A 383-amino-acid chain; its full sequence is Homoserine O-succinyltransferase (383 aa).

The AB hydrolase-1 domain occupies 51–361 (NALLICHALS…ESDFGHDAFL (311 aa)). The active-site Nucleophile is serine 157. Substrate is bound at residue arginine 227. Residues aspartate 324 and histidine 357 contribute to the active site. Residue aspartate 358 participates in substrate binding.

Belongs to the AB hydrolase superfamily. MetX family. As to quaternary structure, homodimer.

It localises to the cytoplasm. It catalyses the reaction L-homoserine + succinyl-CoA = O-succinyl-L-homoserine + CoA. Its pathway is amino-acid biosynthesis; L-methionine biosynthesis via de novo pathway; O-succinyl-L-homoserine from L-homoserine: step 1/1. Its function is as follows. Transfers a succinyl group from succinyl-CoA to L-homoserine, forming succinyl-L-homoserine. This Teredinibacter turnerae (strain ATCC 39867 / T7901) protein is Homoserine O-succinyltransferase.